Reading from the N-terminus, the 626-residue chain is 4-hydroxy-3-methylbut-2-en-1-yl diphosphate synthase (flavodoxin) (626 aa).

The [4Fe-4S] cluster site is built by Cys-521, Cys-524, Cys-555, and Glu-562.

This sequence belongs to the IspG family. [4Fe-4S] cluster is required as a cofactor.

It carries out the reaction (2E)-4-hydroxy-3-methylbut-2-enyl diphosphate + oxidized [flavodoxin] + H2O + 2 H(+) = 2-C-methyl-D-erythritol 2,4-cyclic diphosphate + reduced [flavodoxin]. The protein operates within isoprenoid biosynthesis; isopentenyl diphosphate biosynthesis via DXP pathway; isopentenyl diphosphate from 1-deoxy-D-xylulose 5-phosphate: step 5/6. Its function is as follows. Converts 2C-methyl-D-erythritol 2,4-cyclodiphosphate (ME-2,4cPP) into 1-hydroxy-2-methyl-2-(E)-butenyl 4-diphosphate. This Bacteroides fragilis (strain ATCC 25285 / DSM 2151 / CCUG 4856 / JCM 11019 / LMG 10263 / NCTC 9343 / Onslow / VPI 2553 / EN-2) protein is 4-hydroxy-3-methylbut-2-en-1-yl diphosphate synthase (flavodoxin).